A 251-amino-acid chain; its full sequence is Hydroxyacylglutathione hydrolase (251 aa).

H53, H55, D57, H58, H110, D127, and H165 together coordinate Zn(2+).

The protein belongs to the metallo-beta-lactamase superfamily. Glyoxalase II family. Monomer. The cofactor is Zn(2+).

The enzyme catalyses an S-(2-hydroxyacyl)glutathione + H2O = a 2-hydroxy carboxylate + glutathione + H(+). The protein operates within secondary metabolite metabolism; methylglyoxal degradation; (R)-lactate from methylglyoxal: step 2/2. Thiolesterase that catalyzes the hydrolysis of S-D-lactoyl-glutathione to form glutathione and D-lactic acid. This chain is Hydroxyacylglutathione hydrolase, found in Salmonella dublin (strain CT_02021853).